We begin with the raw amino-acid sequence, 333 residues long: Putative fimbrium anchoring subunit Fim4B (333 aa).

The signal sequence occupies residues 1-20; the sequence is MRNTRYGFLVLLSSLLMLTG. The N-palmitoyl cysteine moiety is linked to residue Cys21. The S-diacylglycerol cysteine moiety is linked to residue Cys21. The segment at 274–333 is disordered; the sequence is ENAGTGEDGKPTPPPEIELPPDDKIEVDKPETPPNPDGGGGMGGNVDGWGPEDNVELPVN. Over residues 294 to 304 the composition is skewed to basic and acidic residues; that stretch reads PDDKIEVDKPE. The segment covering 310–320 has biased composition (gly residues); that stretch reads DGGGGMGGNVD.

The protein belongs to the bacteroidetes fimbrillin superfamily. FimB/Mfa2 family.

It is found in the cell outer membrane. Functionally, putative fimbrium anchoring subunit. The protein is Putative fimbrium anchoring subunit Fim4B of Bacteroides ovatus (strain ATCC 8483 / DSM 1896 / JCM 5824 / BCRC 10623 / CCUG 4943 / NCTC 11153).